Here is a 196-residue protein sequence, read N- to C-terminus: Pyridoxal 5'-phosphate synthase subunit PdxT (196 aa).

46-48 (GES) is a binding site for L-glutamine. The active-site Nucleophile is the Cys78. Residues Arg110 and 138–139 (IR) contribute to the L-glutamine site. Catalysis depends on charge relay system residues His174 and Glu176.

The protein belongs to the glutaminase PdxT/SNO family. In the presence of PdxS, forms a dodecamer of heterodimers. Only shows activity in the heterodimer.

The catalysed reaction is aldehydo-D-ribose 5-phosphate + D-glyceraldehyde 3-phosphate + L-glutamine = pyridoxal 5'-phosphate + L-glutamate + phosphate + 3 H2O + H(+). It carries out the reaction L-glutamine + H2O = L-glutamate + NH4(+). It participates in cofactor biosynthesis; pyridoxal 5'-phosphate biosynthesis. Functionally, catalyzes the hydrolysis of glutamine to glutamate and ammonia as part of the biosynthesis of pyridoxal 5'-phosphate. The resulting ammonia molecule is channeled to the active site of PdxS. The protein is Pyridoxal 5'-phosphate synthase subunit PdxT of Deinococcus radiodurans (strain ATCC 13939 / DSM 20539 / JCM 16871 / CCUG 27074 / LMG 4051 / NBRC 15346 / NCIMB 9279 / VKM B-1422 / R1).